The following is a 409-amino-acid chain: Glucan endo-1,6-beta-glucosidase B (409 aa).

The first 16 residues, 1-16 (MKFILPLFTSLPVALA), serve as a signal peptide directing secretion. Asn35 carries N-linked (GlcNAc...) asparagine glycosylation. Glu228 functions as the Proton donor in the catalytic mechanism. Residue Glu330 is the Nucleophile of the active site.

It belongs to the glycosyl hydrolase 5 (cellulase A) family.

It localises to the secreted. It carries out the reaction Random hydrolysis of (1-&gt;6)-linkages in (1-&gt;6)-beta-D-glucans.. Its function is as follows. Beta-glucanases participate in the metabolism of beta-glucan, the main structural component of the cell wall. Acts on lutean, pustulan and 1,6-oligo-beta-D-glucosides. The protein is Glucan endo-1,6-beta-glucosidase B (exgB) of Emericella nidulans (strain FGSC A4 / ATCC 38163 / CBS 112.46 / NRRL 194 / M139) (Aspergillus nidulans).